A 430-amino-acid chain; its full sequence is NEDD8-activating enzyme E1 catalytic subunit (430 aa).

Residue 52–76 participates in ATP binding; sequence GLGCELLKNLALSGFRTIEVIDMDT. C211 (glycyl thioester intermediate) is an active-site residue.

The protein belongs to the ubiquitin-activating E1 family. UBA3 subfamily. In terms of assembly, heterodimer of uba-3 and ula-1. Interacts with NEDD8 and ubc-12. In terms of tissue distribution, expressed in intestine, vulva epithelium and head and tail neurons.

It localises to the nucleus. The protein resides in the cytoplasm. The catalysed reaction is ATP + [NEDD8 protein] + [E1 NEDD8-activating enzyme]-L-cysteine = AMP + diphosphate + [E1 NEDD8-activating enzyme]-S-[NEDD8 protein]-yl-L-cysteine.. Its pathway is protein modification; protein neddylation. Its function is as follows. Catalytic subunit of the dimeric rfl-1 (uba-3)-ula-1 E1 enzyme. E1 activates NEDD8 by first adenylating its C-terminal glycine residue with ATP, thereafter linking this residue to the side chain of the catalytic cysteine, yielding a NEDD8-uba-3 thioester and free AMP. E1 finally transfers NEDD8 to the catalytic cysteine of ubc-12. Required for cytokinesis and mitotic spindle orientation during early embryogenesis. The sequence is that of NEDD8-activating enzyme E1 catalytic subunit from Caenorhabditis elegans.